The following is a 286-amino-acid chain: Formamidopyrimidine-DNA glycosylase (286 aa).

Proline 2 acts as the Schiff-base intermediate with DNA in catalysis. The active-site Proton donor is glutamate 3. Lysine 61 (proton donor; for beta-elimination activity) is an active-site residue. Positions 103, 122, and 164 each coordinate DNA. The segment at 250 to 284 (NAYAQTGEPCGRCGTLIIRESFMNRGSHYCPNCQK) adopts an FPG-type zinc-finger fold. The active-site Proton donor; for delta-elimination activity is the arginine 274.

It belongs to the FPG family. In terms of assembly, monomer. Zn(2+) serves as cofactor.

The enzyme catalyses Hydrolysis of DNA containing ring-opened 7-methylguanine residues, releasing 2,6-diamino-4-hydroxy-5-(N-methyl)formamidopyrimidine.. The catalysed reaction is 2'-deoxyribonucleotide-(2'-deoxyribose 5'-phosphate)-2'-deoxyribonucleotide-DNA = a 3'-end 2'-deoxyribonucleotide-(2,3-dehydro-2,3-deoxyribose 5'-phosphate)-DNA + a 5'-end 5'-phospho-2'-deoxyribonucleoside-DNA + H(+). In terms of biological role, involved in base excision repair of DNA damaged by oxidation or by mutagenic agents. Acts as a DNA glycosylase that recognizes and removes damaged bases. Has a preference for oxidized purines, such as 7,8-dihydro-8-oxoguanine (8-oxoG). Has AP (apurinic/apyrimidinic) lyase activity and introduces nicks in the DNA strand. Cleaves the DNA backbone by beta-delta elimination to generate a single-strand break at the site of the removed base with both 3'- and 5'-phosphates. This Corynebacterium glutamicum (strain ATCC 13032 / DSM 20300 / JCM 1318 / BCRC 11384 / CCUG 27702 / LMG 3730 / NBRC 12168 / NCIMB 10025 / NRRL B-2784 / 534) protein is Formamidopyrimidine-DNA glycosylase.